The chain runs to 1922 residues: Endoribonuclease Dicer (1922 aa).

The Helicase ATP-binding domain maps to 51-227; the sequence is LLEAALDHNT…ELEEKIQKLE (177 aa). 64–71 contributes to the ATP binding site; sequence LNTGSGKT. Positions 175-178 match the DECH box motif; it reads DECH. The interval 256 to 595 is required for interaction with PRKRA and TARBP2; that stretch reads DCGPFTDRSG…LRNKCSKSVD (340 aa). A disordered region spans residues 409-433; it reads YVSWSDSEDDDEDEEIEEKEKPETN. A phosphoserine mark is found at serine 413 and serine 415. Over residues 414 to 425 the composition is skewed to acidic residues; it reads DSEDDDEDEEIE. Residues 433-602 enclose the Helicase C-terminal domain; sequence NFPSPFTNIL…SVDTGETDID (170 aa). Residues 630–722 form the Dicer dsRNA-binding fold domain; that stretch reads AIGHINRYCA…MPVGKETVKY (93 aa). The 148-residue stretch at 895 to 1042 folds into the PAZ domain; that stretch reads KFMEDIEKSE…LVPELCAIHP (148 aa). Phosphoserine is present on residues serine 1016 and serine 1160. Residues 1276-1403 form the RNase III 1 domain; the sequence is DSEQSPSIGY…TDKWEKDEMT (128 aa). Positions 1316, 1395, and 1398 each coordinate Mg(2+). Serine 1460, serine 1468, and serine 1470 each carry phosphoserine. The RNase III 2 domain occupies 1666 to 1824; the sequence is FENFEKKINY…LAGAIYMDSG (159 aa). Mg(2+) is bound by residues glutamate 1705, aspartate 1810, and glutamate 1813. The DRBM domain occupies 1849–1914; that stretch reads VPRSPVRELL…ARRALRSLKA (66 aa). At serine 1868 the chain carries Phosphoserine.

It belongs to the helicase family. Dicer subfamily. In terms of assembly, component of the RISC loading complex (RLC), or micro-RNA (miRNA) loading complex (miRLC), which is composed of DICER1, AGO2 and TARBP2; DICER1 and TARBP2 are required to process precursor miRNAs (pre-miRNAs) to mature miRNAs and then load them onto AGO2. Note that the trimeric RLC/miRLC is also referred to as RISC. Interacts with DHX9, AGO1, PIWIL1 and PRKRA. Associates with the 60S ribosome. Interacts with BCDIN3D. Interacts with AGO2, TARBP2, EIF6, MOV10 and RPL7A (60S ribosome subunit); they form a large RNA-induced silencing complex (RISC). Interacts (via Dicer dsRNA-binding fold domain) with ALOX5 (via PLAT domain); this interaction enhances arachidonate 5-lipoxygenase activity and modifies the miRNA precursor processing activity of DICER1. As to quaternary structure, (Microbial infection) Interacts with ebolavirus transcriptional activator VP30; this interaction prevents TARBP2/TRBP binding to DICER1 and thus allows the virus to counteract host RNA silencing. (Microbial infection) Interacts with ebolavirus transcriptional activator VP35; this interaction prevents TARBP2/TRBP binding to DICER1 and thus allows the virus to counteract host RNA silencing. It depends on Mg(2+) as a cofactor. Mn(2+) serves as cofactor.

It is found in the cytoplasm. The protein resides in the perinuclear region. It catalyses the reaction Endonucleolytic cleavage to 5'-phosphomonoester.. Functionally, double-stranded RNA (dsRNA) endoribonuclease playing a central role in short dsRNA-mediated post-transcriptional gene silencing. Cleaves naturally occurring long dsRNAs and short hairpin pre-microRNAs (miRNA) into fragments of twenty-one to twenty-three nucleotides with 3' overhang of two nucleotides, producing respectively short interfering RNAs (siRNA) and mature microRNAs. SiRNAs and miRNAs serve as guide to direct the RNA-induced silencing complex (RISC) to complementary RNAs to degrade them or prevent their translation. Gene silencing mediated by siRNAs, also called RNA interference, controls the elimination of transcripts from mobile and repetitive DNA elements of the genome but also the degradation of exogenous RNA of viral origin for instance. The miRNA pathway on the other side is a mean to specifically regulate the expression of target genes. The protein is Endoribonuclease Dicer (DICER1) of Homo sapiens (Human).